A 179-amino-acid chain; its full sequence is ATP synthase subunit delta (179 aa).

The protein belongs to the ATPase delta chain family. F-type ATPases have 2 components, F(1) - the catalytic core - and F(0) - the membrane proton channel. F(1) has five subunits: alpha(3), beta(3), gamma(1), delta(1), epsilon(1). F(0) has three main subunits: a(1), b(2) and c(10-14). The alpha and beta chains form an alternating ring which encloses part of the gamma chain. F(1) is attached to F(0) by a central stalk formed by the gamma and epsilon chains, while a peripheral stalk is formed by the delta and b chains.

The protein localises to the cell inner membrane. Functionally, f(1)F(0) ATP synthase produces ATP from ADP in the presence of a proton or sodium gradient. F-type ATPases consist of two structural domains, F(1) containing the extramembraneous catalytic core and F(0) containing the membrane proton channel, linked together by a central stalk and a peripheral stalk. During catalysis, ATP synthesis in the catalytic domain of F(1) is coupled via a rotary mechanism of the central stalk subunits to proton translocation. In terms of biological role, this protein is part of the stalk that links CF(0) to CF(1). It either transmits conformational changes from CF(0) to CF(1) or is implicated in proton conduction. The sequence is that of ATP synthase subunit delta from Burkholderia thailandensis (strain ATCC 700388 / DSM 13276 / CCUG 48851 / CIP 106301 / E264).